The chain runs to 86 residues: V-type proton ATPase subunit e (86 aa).

Residues M1–G21 form a helical membrane-spanning segment. Over P22–G32 the chain is Cytoplasmic. Residues I33–F53 form a helical membrane-spanning segment. Over L54–N86 the chain is Lumenal.

It belongs to the V-ATPase e1/e2 subunit family. V-ATPase is a heteromultimeric enzyme made up of two complexes: the ATP-hydrolytic V1 complex and the proton translocation V0 complex. The V1 complex consists of three catalytic AB heterodimers that form a heterohexamer, three peripheral stalks each consisting of EG heterodimers, one central rotor including subunits D and F, and the regulatory subunits C and H. The proton translocation complex V0 consists of the proton transport subunit a, a ring of proteolipid subunits c9c'', rotary subunit d, subunits e and f, and the accessory subunits vah-19/Ac45 and vah-20/PRR.

The protein resides in the apical cell membrane. Functionally, subunit of the V0 complex of vacuolar(H+)-ATPase (V-ATPase), a multisubunit enzyme composed of a peripheral complex (V1) that hydrolyzes ATP and a membrane integral complex (V0) that translocates protons. V-ATPase is responsible for acidifying and maintaining the pH of intracellular compartments and in some cell types, is targeted to the plasma membrane, where it is responsible for acidifying the extracellular environment. During embryonic development, the V-ATPase is required to repress fusion of epidermal cells probably by negatively regulating eff-1-mediated cell fusion. The protein is V-type proton ATPase subunit e of Caenorhabditis elegans.